A 440-amino-acid chain; its full sequence is Chromosome partition protein MukF (440 aa).

Residues 208–236 (LSETSGTLRELQDTLEAAGDKLQANLLRI) form a leucine-zipper region.

The protein belongs to the MukF family. In terms of assembly, interacts, and probably forms a ternary complex, with MukE and MukB via its C-terminal region. The complex formation is stimulated by calcium or magnesium. It is required for an interaction between MukE and MukB.

Its subcellular location is the cytoplasm. It localises to the nucleoid. Functionally, involved in chromosome condensation, segregation and cell cycle progression. May participate in facilitating chromosome segregation by condensation DNA from both sides of a centrally located replisome during cell division. Not required for mini-F plasmid partitioning. Probably acts via its interaction with MukB and MukE. Overexpression results in anucleate cells. It has a calcium binding activity. The sequence is that of Chromosome partition protein MukF from Salmonella paratyphi B (strain ATCC BAA-1250 / SPB7).